A 611-amino-acid polypeptide reads, in one-letter code: Chaperone protein DnaK (611 aa).

Position 173 is a phosphothreonine; by autocatalysis (Thr173). Residues Ala579–Ala592 are compositionally biased toward low complexity. The disordered stretch occupies residues Ala579–Lys611. Over residues Val600–Lys611 the composition is skewed to acidic residues.

It belongs to the heat shock protein 70 family.

In terms of biological role, acts as a chaperone. This is Chaperone protein DnaK from Bacillus mycoides (strain KBAB4) (Bacillus weihenstephanensis).